We begin with the raw amino-acid sequence, 294 residues long: Survival motor neuron protein (294 aa).

Positions methionine 1 to valine 12 are enriched in gly residues. The disordered stretch occupies residues methionine 1 to aspartate 32. Alanine 2 is modified (N-acetylalanine). Serine 4, serine 5, and serine 8 each carry phosphoserine; by PKA. Position 25 is a phosphothreonine (threonine 25). The segment at glycine 26–lysine 51 is interacts with GEMIN2. 2 positions are modified to phosphoserine: serine 28 and serine 31. A Glycyl lysine isopeptide (Lys-Gly) (interchain with G-Cter in SUMO2) cross-link involves residue lysine 51. Residues isoleucine 59–serine 88 form a disordered region. Residues threonine 68–lysine 82 show a composition bias toward basic residues. The residue at position 69 (threonine 69) is a Phosphothreonine. Threonine 85 carries the post-translational modification Phosphothreonine; by PKA. In terms of domain architecture, Tudor spans glutamine 91 to asparagine 151. Residues lysine 97–lysine 209 are required for interaction with RPP20/POP7. Low complexity predominate over residues alanine 156–serine 166. Residues alanine 156–proline 222 are disordered. Residue serine 187 is modified to Phosphoserine; by PKA. Positions leucine 194–arginine 204 are enriched in pro residues. A compositionally biased stretch (low complexity) spans glycine 206 to asparagine 215. Residue lysine 209 forms a Glycyl lysine isopeptide (Lys-Gly) (interchain with G-Cter in SUMO2) linkage. The segment at proline 240 to tryptophan 267 is P2 (binding site for SNRPB). Positions aspartate 252–phenylalanine 280 are involved in homooligomerization. The segment at glycine 279–asparagine 294 is required for interaction with SYNCRIP.

The protein belongs to the SMN family. In terms of assembly, homooligomer; may form higher order homooligomers in the dimer to octamer range. Part of the core SMN complex that contains SMN1, GEMIN2/SIP1, DDX20/GEMIN3, GEMIN4, GEMIN5, GEMIN6, GEMIN7, GEMIN8 and STRAP/UNRIP. Part of the SMN-Sm complex that contains SMN1, GEMIN2/SIP1, DDX20/GEMIN3, GEMIN4, GEMIN5, GEMIN6, GEMIN7, GEMIN8, STRAP/UNRIP and the Sm proteins SNRPB, SNRPD1, SNRPD2, SNRPD3, SNRPE, SNRPF and SNRPG. Component of an import snRNP complex composed of KPNB1, RNUT1, SMN1 and ZNF259. Interacts with DDX20, FBL, NOLA1, RNUT1, SYNCRIP and with several spliceosomal snRNP core Sm proteins, including SNRPB, SNRPD1, SNRPD2, SNRPD3, SNRPE and ILF3. Interacts with GEMIN2; the interaction is direct. Interacts with GEMIN3; the interaction is direct. Interacts with GEMIN8; the interaction is direct. Interacts with SNRPB; the interaction is direct. Interacts (via Tudor domain) with SNRPD1 (via C-terminus); the interaction is direct. Interacts with SNRPD2; the interaction is direct. Interacts (via Tudor domain) with SNRPD3 (via C-terminus); the interaction is direct. Interacts with SNRPE; the interaction is direct. Interacts with OSTF1, LSM10, LSM11 and RPP20/POP7. Interacts (via C-terminal region) with ZPR1 (via C-terminal region). Interacts (via Tudor domain) with COIL. Interacts with SETX; recruits SETX to POLR2A. Interacts with POLR2A (via the C-terminal domain (CTD)). Interacts with PRMT5. Interacts with XRN2. Interacts (via C-terminus) with FMR1 (via C-terminus); the interaction is direct and occurs in a RNA-independent manner. Interacts (via Tudor domain) with SF3B2 ('Arg-508'-methylated form). Interacts with WRAP53/TCAB1. Interacts (via Tudor domain) with ELAVL4 in an RNA-independent manner; the interaction is required for localization of ELAVL4 to RNA granules. Interacts with FRG1. As to quaternary structure, does not homooligomerize. Does not interact with SNRPB. In terms of tissue distribution, expressed in a wide variety of tissues. Expressed at high levels in brain, kidney and liver, moderate levels in skeletal and cardiac muscle, and low levels in fibroblasts and lymphocytes. Also seen at high levels in spinal cord. Present in osteoclasts and mononuclear cells (at protein level).

It localises to the nucleus. The protein localises to the gem. Its subcellular location is the cajal body. It is found in the cytoplasm. The protein resides in the cytoplasmic granule. It localises to the perikaryon. The protein localises to the cell projection. Its subcellular location is the neuron projection. It is found in the axon. The protein resides in the myofibril. It localises to the sarcomere. The protein localises to the z line. Its function is as follows. The SMN complex catalyzes the assembly of small nuclear ribonucleoproteins (snRNPs), the building blocks of the spliceosome, and thereby plays an important role in the splicing of cellular pre-mRNAs. Most spliceosomal snRNPs contain a common set of Sm proteins SNRPB, SNRPD1, SNRPD2, SNRPD3, SNRPE, SNRPF and SNRPG that assemble in a heptameric protein ring on the Sm site of the small nuclear RNA to form the core snRNP (Sm core). In the cytosol, the Sm proteins SNRPD1, SNRPD2, SNRPE, SNRPF and SNRPG are trapped in an inactive 6S pICln-Sm complex by the chaperone CLNS1A that controls the assembly of the core snRNP. To assemble core snRNPs, the SMN complex accepts the trapped 5Sm proteins from CLNS1A forming an intermediate. Within the SMN complex, SMN1 acts as a structural backbone and together with GEMIN2 it gathers the Sm complex subunits. Binding of snRNA inside 5Sm ultimately triggers eviction of the SMN complex, thereby allowing binding of SNRPD3 and SNRPB to complete assembly of the core snRNP. Ensures the correct splicing of U12 intron-containing genes that may be important for normal motor and proprioceptive neurons development. Also required for resolving RNA-DNA hybrids created by RNA polymerase II, that form R-loop in transcription terminal regions, an important step in proper transcription termination. May also play a role in the metabolism of small nucleolar ribonucleoprotein (snoRNPs). In Homo sapiens (Human), this protein is Survival motor neuron protein (SMN1).